The primary structure comprises 309 residues: Metal ABC transporter substrate-binding lipoprotein SsaB (309 aa).

The signal sequence occupies residues 1–19 (MKKLGFLSLLLLAVCTLFA). Cys20 carries the N-palmitoyl cysteine lipid modification. Residue Cys20 is the site of S-diacylglycerol cysteine attachment. 4 residues coordinate a divalent metal cation: His67, His139, Glu205, and Asp280.

This sequence belongs to the bacterial solute-binding protein 9 family. Lipoprotein receptor antigen (Lrai) subfamily. As to quaternary structure, homodimer and homotrimer.

It is found in the cell membrane. In terms of biological role, part of an ATP-binding cassette (ABC) transport system involved in metal import. Binds a metal with high affinity and specificity and delivers it to the membrane permease for translocation into the cytoplasm. Also acts as an adhesin which is involved on adherence to extracellular matrix. It is an important factor in the pathogenesis and infection. May contribute to the formation and accumulation of dental plaque. In Streptococcus sanguinis, this protein is Metal ABC transporter substrate-binding lipoprotein SsaB (ssaB).